A 65-amino-acid chain; its full sequence is Putative primary metabolism protein prl65 (65 aa).

The segment at 1–25 (MTKYSKGNKVEYHPIGGPSGTSTST) is disordered.

Its function is as follows. May play a role in primary metabolism. This Schizosaccharomyces pombe (strain 972 / ATCC 24843) (Fission yeast) protein is Putative primary metabolism protein prl65.